A 639-amino-acid polypeptide reads, in one-letter code: Bucky ball (639 aa).

Residues 178 to 187 (ATKECKEDPV) are compositionally biased toward basic and acidic residues. 3 disordered regions span residues 178-205 (ATKE…SSQG), 218-242 (LDSS…EPQT), and 581-614 (RSWR…RSEY). Residues 189-205 (RPTTYSDSAYDAESSQG) are compositionally biased toward polar residues. Residues 225-240 (EEEEEEEKDVNEEDEP) show a composition bias toward acidic residues. Positions 584 to 593 (RQVTGPQDQG) are enriched in polar residues. The span at 596–609 (PLRRSTCKSIHQQR) shows a compositional bias: basic residues. 2 positions are modified to symmetric dimethylarginine: R627 and R629. Short sequence motifs (RG Motif) lie at residues 627–628 (RG), 629–630 (RG), and 635–636 (RG).

In terms of assembly, specifically interacts (when methylated) with tdrd6 (via Tudor domain); interaction is responsible for recruitment of different protein complexes to germ plasm. Interacts with rbpms2 and dazl; interaction mediates Balbiani body formation. Interacts with kif5ba; interaction leads to buc enrichment at the embryonic cleavage furrows and mediates dorsoventral patterning. In terms of processing, symmetric dimethylarginine modification promotes interaction with tdrd6.

It localises to the cytoplasm. The protein localises to the cleavage furrow. In terms of biological role, prion-like protein required for the formation of Balbiani body (electron-dense aggregates in the oocyte) and germ plasm assembly, and for the establishment of oocyte polarity during early oogenesis. Mobility and aggregation properties are improved by tudor domain-containing protein tdrd6 through interaction with dimethylated arginines Tri-RG domains. Establishes oocyte polarity through interactions with RNA-binding proteins rbpms2 and dazl, initiating a positive feedback loop amplification mechanism in the Balbiani body. Interaction of BUC protein and mRNA with rbpms2 and dazl is required to mediate Balbiani body formation. Involved in recruitment of germ plasm to embryonic cleavage furrows and dorsoventral patterning through interaction with Kinesin-1/KIF5BA. This chain is Bucky ball, found in Danio rerio (Zebrafish).